Consider the following 577-residue polypeptide: Protein NRT1/ PTR FAMILY 6.2 (577 aa).

12 consecutive transmembrane segments (helical) span residues 28-48 (WITA…TMGI), 74-94 (FMGT…SFLG), 96-116 (FKTI…LAVA), 134-154 (IPAT…IALG), 183-203 (FFFN…VTVL), 214-234 (WAYG…LCGT), 332-352 (LLPI…MITF), 369-389 (IPAG…LAVY), 409-429 (LQRI…AALV), 447-467 (ISVF…AFIY), 488-508 (GLFL…VSIV), and 535-555 (WLLV…ALWF).

This sequence belongs to the major facilitator superfamily. Proton-dependent oligopeptide transporter (POT/PTR) (TC 2.A.17) family. In terms of tissue distribution, expressed in shoots, leaves, flowers and siliques. Expressed in leaf petiole.

Its subcellular location is the membrane. In terms of biological role, low-affinity proton-dependent nitrate transporter. Not involved in dipeptides transport. The sequence is that of Protein NRT1/ PTR FAMILY 6.2 (NPF6.2) from Arabidopsis thaliana (Mouse-ear cress).